Here is an 82-residue protein sequence, read N- to C-terminus: Small ribosomal subunit protein bS18 (82 aa).

The protein belongs to the bacterial ribosomal protein bS18 family. Part of the 30S ribosomal subunit. Forms a tight heterodimer with protein bS6.

Its function is as follows. Binds as a heterodimer with protein bS6 to the central domain of the 16S rRNA, where it helps stabilize the platform of the 30S subunit. In Bifidobacterium adolescentis (strain ATCC 15703 / DSM 20083 / NCTC 11814 / E194a), this protein is Small ribosomal subunit protein bS18.